The chain runs to 243 residues: Homologous-pairing protein 2 homolog (243 aa).

Positions 86–153 form a coiled coil; it reads QESIHDLNRK…ESKLLTFQTK (68 aa). The segment at 217 to 243 is disordered; the sequence is IPDYSKPLSQQTLSSTNDESPFKKQKK. A compositionally biased stretch (polar residues) spans 223–235; it reads PLSQQTLSSTNDE.

It belongs to the HOP2 family.

It is found in the nucleus. Functionally, required for proper homologous pairing and efficient cross-over and intragenic recombination during meiosis. The sequence is that of Homologous-pairing protein 2 homolog (hop2) from Dictyostelium discoideum (Social amoeba).